We begin with the raw amino-acid sequence, 1529 residues long: uncharacterized protein (1529 aa).

Residues 1-11 (MDKNNNNNNSN) show a composition bias toward low complexity. Disordered regions lie at residues 1-85 (MDKN…SKGV), 335-371 (LLSN…WSSS), 660-694 (LPNL…TATA), 798-843 (NCNI…SSYS), 1016-1035 (SSLP…NTNN), 1334-1364 (QQQQ…QLQQ), and 1454-1497 (QQQV…SRLP). Positions 24-42 (QKRVQNPSFSSGQSRTVPS) are enriched in polar residues. Over residues 51 to 79 (ISSSSSSSSISTTNNTTTTTTSGTGSTSS) the composition is skewed to low complexity. Positions 810–833 (NNNNNNNNNNNNNNNNNNNNNNNN) are enriched in low complexity. Polar residues-rich tracts occupy residues 834 to 843 (VLPRSNSSYS) and 1016 to 1027 (SSLPISQNLSDD). The span at 1454-1494 (QQQVQTPSSPQTLASLLGNSSSNTLTSSSSTLSLNESSTLS) shows a compositional bias: low complexity.

This is an uncharacterized protein from Dictyostelium discoideum (Social amoeba).